We begin with the raw amino-acid sequence, 299 residues long: Taste receptor type 2 member 5 (299 aa).

Met1 is a topological domain (extracellular). A helical transmembrane segment spans residues 2-22 (LSAGLGLLMLVAVVEFLIGLI). The Cytoplasmic portion of the chain corresponds to 23–45 (GNGVLVVWSFREWIRKFSWSSYN). The helical transmembrane segment at 46 to 66 (LIILGLAGCRFVLQWLIILDL) threads the bilayer. The Extracellular portion of the chain corresponds to 67-82 (SLFPLFQSSRWLRYLS). Residues 83 to 103 (IFWVLVSQASLWFATFLSVFY) form a helical membrane-spanning segment. Residues 104-127 (CKKITTFDHPAYLWLKQRAYNLSL) are Cytoplasmic-facing. The chain crosses the membrane as a helical span at residues 128 to 148 (WCLLGYFIINLLLTVQIGLMF). Topologically, residues 149–175 (YHPPQGNSSIRYPFESWQYLYAFRLNS) are extracellular. N-linked (GlcNAc...) asparagine glycosylation occurs at Asn155. The chain crosses the membrane as a helical span at residues 176-196 (GSYLPLMVFLVSSGMLIVSLY). Residues 197 to 223 (THHKKMKVHSAGRRDVRAKAHITALKS) are Cytoplasmic-facing. A helical transmembrane segment spans residues 224 to 244 (LGCFLLLHLVYIMASPFSIAS). Topologically, residues 245-253 (KTYPPDLTS) are extracellular. The helical transmembrane segment at 254-274 (VFIWETLMAAYPSLHSLILIM) threads the bilayer. Topologically, residues 275 to 299 (GIPRVKQTCQKILWKTVCARRCWGP) are cytoplasmic.

This sequence belongs to the G-protein coupled receptor T2R family.

The protein localises to the membrane. In terms of biological role, receptor that may play a role in the perception of bitterness and is gustducin-linked. May play a role in sensing the chemical composition of the gastrointestinal content. The activity of this receptor may stimulate alpha gustducin, mediate PLC-beta-2 activation and lead to the gating of TRPM5. The sequence is that of Taste receptor type 2 member 5 (TAS2R5) from Pan paniscus (Pygmy chimpanzee).